The primary structure comprises 208 residues: Uracil phosphoribosyltransferase (208 aa).

5-phospho-alpha-D-ribose 1-diphosphate contacts are provided by residues Arg-78, Arg-103, and 130 to 138 (DPMLATGGS). Residues Ile-193 and 198 to 200 (GDA) each bind uracil. 5-phospho-alpha-D-ribose 1-diphosphate is bound at residue Asp-199.

The protein belongs to the UPRTase family. Mg(2+) is required as a cofactor.

It catalyses the reaction UMP + diphosphate = 5-phospho-alpha-D-ribose 1-diphosphate + uracil. It participates in pyrimidine metabolism; UMP biosynthesis via salvage pathway; UMP from uracil: step 1/1. With respect to regulation, allosterically activated by GTP. Functionally, catalyzes the conversion of uracil and 5-phospho-alpha-D-ribose 1-diphosphate (PRPP) to UMP and diphosphate. The protein is Uracil phosphoribosyltransferase of Yersinia pestis.